We begin with the raw amino-acid sequence, 1037 residues long: Probable aminoglycoside efflux pump (1037 aa).

Topologically, residues 1–9 are cytoplasmic; the sequence is MANFFIDRP. The helical transmembrane segment at 10–28 threads the bilayer; it reads IFAWVLAILLCLTGTLAIF. Topologically, residues 29-339 are periplasmic; it reads SLPVEQYPDL…TSFVKASIED (311 aa). A helical transmembrane segment spans residues 340–359; the sequence is VVKTLLEAIALVFLVMYLFL. Topologically, residues 360 to 365 are cytoplasmic; sequence QNFRAT. Residues 366–385 traverse the membrane as a helical segment; it reads LIPTIAVPVVLMGTFSVLYA. The Periplasmic segment spans residues 386-391; sequence FGYSVN. The chain crosses the membrane as a helical span at residues 392 to 413; sequence TLTMFAMVLAIGLLVDDAIVVV. Residues 414–441 are Cytoplasmic-facing; that stretch reads ENVERIMSEEGLTPREATRKSMGQIQGA. A helical membrane pass occupies residues 442–460; sequence LVGIAMVLSAVFVPMAFFG. Residues 461-473 lie on the Periplasmic side of the membrane; the sequence is GTTGAIYRQFSIT. A helical membrane pass occupies residues 474-496; it reads IVAAMVLSVLVAMILTPALCATL. Topologically, residues 497–537 are cytoplasmic; that stretch reads LKPLKKGEHHGQKGFFAWFNQMFNRNAERYEKGVAKILHRS. The helical transmembrane segment at 538–556 threads the bilayer; the sequence is LRWIVIYVLLLGGMVFLFL. Residues 557 to 870 are Periplasmic-facing; the sequence is RLPTSFLPLE…SYQERLSGAQ (314 aa). Residues 871-890 form a helical membrane-spanning segment; it reads APALYAISLLVVFLCLAALY. Residues 891 to 896 lie on the Cytoplasmic side of the membrane; that stretch reads ESWSVP. The chain crosses the membrane as a helical span at residues 897 to 916; sequence FSVMLVVPLGVIGALLATWM. Over 917–922 the chain is Periplasmic; the sequence is RGLEND. The helical transmembrane segment at 923–944 threads the bilayer; sequence VYFQVGLLTVIGLSAKNAILIV. The Cytoplasmic portion of the chain corresponds to 945–971; sequence EFANEMNQKGHDLFEATLHACRQRLRP. A helical transmembrane segment spans residues 972 to 990; sequence ILMTSLAFIFGVLPMATST. Topologically, residues 991-1003 are periplasmic; sequence GAGSGGQHAVGTG. Residues 1004–1026 form a helical membrane-spanning segment; the sequence is VMGGMISATILAIYFVPLFFVLV. Residues 1027–1037 lie on the Cytoplasmic side of the membrane; that stretch reads RRRFPLKPRPE.

The protein belongs to the resistance-nodulation-cell division (RND) (TC 2.A.6) family.

It is found in the cell inner membrane. Functionally, participates in the efflux of aminoglycosides. Confers resistance to a variety of these substances. The chain is Probable aminoglycoside efflux pump (acrD) from Escherichia coli (strain K12).